Here is a 351-residue protein sequence, read N- to C-terminus: Dysbindin (351 aa).

The stretch at phenylalanine 106–lysine 179 forms a coiled coil. The segment at arginine 291–glutamine 325 is disordered. Residues serine 295–serine 306 show a composition bias toward low complexity.

The protein belongs to the dysbindin family. As to quaternary structure, component of the biogenesis of lysosome-related organelles complex 1 (BLOC-1).

It localises to the cytoplasm. The protein localises to the cytoplasmic vesicle membrane. The protein resides in the cytoplasmic vesicle. It is found in the secretory vesicle. Its subcellular location is the synaptic vesicle membrane. It localises to the endosome membrane. The protein localises to the melanosome membrane. The protein resides in the nucleus. It is found in the postsynaptic density. Its subcellular location is the endoplasmic reticulum. In terms of biological role, component of the BLOC-1 complex, a complex that is required for normal biogenesis of lysosome-related organelles (LRO), such as platelet dense granules and melanosomes. Plays a role in intracellular vesicle trafficking. Plays a role in synaptic vesicle trafficking and in neurotransmitter release. May be required for normal dopamine homeostasis in the cerebral cortex, hippocampus, and hypothalamus. Plays a role in the regulation of cell surface exposure of DRD2. Contributes to the regulation of dopamine signaling. May play a role in actin cytoskeleton reorganization and neurite outgrowth. This is Dysbindin (DTNBP1) from Gallus gallus (Chicken).